The primary structure comprises 1161 residues: Auxin response factor 19 (1161 aa).

A disordered region spans residues 1–20 (MMKQAQQQPPPPPASSAATT). The segment at residues 154-256 (FCKTLTASDT…QLLLGIRRAN (103 aa)) is a DNA-binding region (TF-B3). A disordered region spans residues 573-598 (NQMQQQHASSTQGQQPATSQPLLLPQ). Residues 1027-1111 (RTFTKVYKRG…KCIRILSPQE (85 aa)) form the PB1 domain.

The protein belongs to the ARF family. As to quaternary structure, homodimers and heterodimers. As to expression, expressed in roots, culms, leaves and young panicles.

Its subcellular location is the nucleus. Auxin response factors (ARFs) are transcriptional factors that bind specifically to the DNA sequence 5'-TGTCTC-3' found in the auxin-responsive promoter elements (AuxREs). The polypeptide is Auxin response factor 19 (ARF19) (Oryza sativa subsp. japonica (Rice)).